We begin with the raw amino-acid sequence, 1090 residues long: MPVFHTKTIENILEPVAQQLHYVLAMAEKNATSVDEVRHLGTSMPNLDRFASRSALALSRASSRRSIPEYITPDTVRHVVNDDDCPVCQLMMPRGKDGCVSRLVILHEEANDGNAMPDLTGPVGMVSRAVGNLIQVGYDTCDHSDDRILQQDMPPALQRVEGSSKLLEESSYSLKHDPYSVPARKKLIDGARGILQGTSALLLCFDESEVRKIIRVCRKANDYVAVSEVIESMADLQQFVKDISPVLHDVTNDVNLRQQELTHQVHREILIRCMDSIKVIAPILICSMKTSIELGTPHPRQGHAEAIANRNFMSQRMTEEMNEIIRVLQLTTYDEDEWDADNVTVMRKALSAAKSLLTAALDWLADPHARSGAVGEKAIRRICEYADRISARALPEDAQSIKRSIFEITSFTDELCNLRNNGQPDRENLAAQTARRLKDLVGSQNSSGLMGDALQNAQRHGGANPAHTAAGRLEQALRWLDNPGLDDGGLGLQALRLLTADARKLADRLNPQDRNRLLGLCSDIDRLAAQLADLERRGLGNSPEAHQIRNQLKNALRDLGDFMRRVLTDRVVDDFADITTPLKQFVEAVHADPYDPNREQNFVDKSQRLTDHSQSMTTTARLVASCGPSKSKKTVEAILDTAEKVEQLTPQLVNAGRVRLHNPGSEQHFENIHKQYADALHRLRSHVDDAIDTGEFVRASETAMRRYTNHCEGAINGADAHGLVNNSSQIARLGNRVLMTAQNEADNSEEPSFVSRVRNAADQLHNAIPPMVNNAKQIAQNPHDQYAAQNWRGTNDHLLNSVRAVGDAITGVPMSNGRHSSYQESISRASPYNPPPPSSQVIRSVNASPPTAPIIHNKMIIREDIPAPPRPPPPVELSPPPRPPPPPEYDEEEETRAFWERYPLPQASHQPMLAAAHNLHNELKQWSSQENDIVAAAKRMAILMARLSQLVRGEGGTKKDLINCSKAIADSSEEVTRLAVQLARLCTDIKMRTALLQVSERIPTIATQLKVLSTVKATMLGSANVIGPYGQPVEGSEEDDEAMQQLVHNAQNLMQSVKDVVRAAEAASIKIRTNSGLRLRWLRKPMWSNF.

2 repeat units span residues 339-446 (DADN…SQNS) and 455-561 (QNAQ…DLGD). The interval 339 to 561 (DADNVTVMRK…LKNALRDLGD (223 aa)) is 2 X repeats. Disordered stretches follow at residues 811-842 (GVPM…SQVI) and 864-895 (DIPA…EEET). Residues 817–830 (GRHSSYQESISRAS) are compositionally biased toward polar residues. Positions 866–887 (PAPPRPPPPVELSPPPRPPPPP) are enriched in pro residues.

It belongs to the vinculin/alpha-catenin family. In terms of assembly, may interact with sorb-1. As to expression, expressed in gonadal sheath cells and the spermatheca. Expressed in body wall muscles.

The protein resides in the cytoplasm. The protein localises to the cytoskeleton. It is found in the cell junction. Its subcellular location is the adherens junction. It localises to the cell membrane. The protein resides in the focal adhesion. In terms of biological role, involved in cell adhesion. May be involved in the attachment of the actin-based microfilaments to the plasma membrane. Involved in ovulation. The polypeptide is Vinculin (Caenorhabditis elegans).